We begin with the raw amino-acid sequence, 470 residues long: Cysteine--tRNA ligase (470 aa).

C27 serves as a coordination point for Zn(2+). The short motif at 29 to 39 is the 'HIGH' region element; that stretch reads PTVYNYIHIGN. Positions 207, 232, and 236 each coordinate Zn(2+). The 'KMSKS' region motif lies at 264–268; the sequence is KMSKS. Residue K267 coordinates ATP.

It belongs to the class-I aminoacyl-tRNA synthetase family. As to quaternary structure, monomer. Zn(2+) is required as a cofactor.

The protein resides in the cytoplasm. It carries out the reaction tRNA(Cys) + L-cysteine + ATP = L-cysteinyl-tRNA(Cys) + AMP + diphosphate. This chain is Cysteine--tRNA ligase, found in Lachnoclostridium phytofermentans (strain ATCC 700394 / DSM 18823 / ISDg) (Clostridium phytofermentans).